The chain runs to 2684 residues: Teneurin-1 (2684 aa).

Disordered stretches follow at residues 1–37 (MFQH…HDYT), 127–156 (TTSS…PTYS), and 170–204 (GTNQ…KKFD). At 1–216 (MFQHRTTNAQ…SDTCSRWPSK (216 aa)) the chain is on the cytoplasmic side. The segment covering 11-24 (GPPPNRPMPRPPAG) has biased composition (pro residues). Residues 127–136 (TTSSTLSPAS) are compositionally biased toward low complexity. The chain crosses the membrane as a helical span at residues 217 to 237 (WNILLAAALLVALFVICILLF). Residues 238-2684 (RAPNYVYTQP…VHSWKFRKSE (2447 aa)) are Extracellular-facing. EGF-like domains are found at residues 463–499 (TGRT…KECE) and 501–534 (RHNW…EACE). 6 disulfide bridges follow: Cys467–Cys476, Cys472–Cys487, Cys489–Cys498, Cys505–Cys516, Cys510–Cys522, and Cys524–Cys533. The interval 576–614 (PQAQSPPRRGQEPTESSKTRKAQVKPTPTSEKKKESREL) is disordered. Basic and acidic residues-rich tracts occupy residues 584–593 (RGQEPTESSK) and 605–614 (SEKKKESREL). EGF-like domains follow at residues 650 to 684 (DSVD…SNCT) and 716 to 753 (AIDG…VDCS). Disulfide bonds link Cys654-Cys666, Cys659-Cys672, Cys674-Cys683, Cys720-Cys730, Cys724-Cys741, and Cys743-Cys752. 4 NHL repeats span residues 1276–1317 (DSCG…IDTT), 1334–1378 (RTCA…VVHD), 1398–1441 (SASA…VRKL), and 1470–1513 (AVSL…VSAR).

This sequence belongs to the tenascin family. Teneurin subfamily. Post-translationally, probably proteolytically processed to generate a N-terminal intracellular domain. As to expression, isoform 1 is mainly expressed in organs derived from the mesoderm, including the pharynx, vulva muscles, gonad distal tip cells, intestine and several tail neurons. Isoform 2 is mainly expressed in the organs derived from the ectoderm, including hypodermal cells, head ganglion neurons and tail neurons (at protein level).

The protein resides in the nucleus. It is found in the cell membrane. Its subcellular location is the membrane. In terms of biological role, plays a role in the gonadal basement membrane maintenance and/or adhesion early in development. Contributes to the guidance of pharyngeal neurons. This Caenorhabditis elegans protein is Teneurin-1 (ten-1).